Here is a 322-residue protein sequence, read N- to C-terminus: Exosome complex component RRP4 homolog (322 aa).

The region spanning 94 to 172 (GDIVVGRVIE…HDGSLQLQAR (79 aa)) is the S1 motif domain. A KH domain is found at 182 to 237 (GQLLKVDPYLVKRSKHHFHYVESLGIDLIIGCNGFIWVGEHVEVRDPMAIDDQKDE).

Belongs to the RRP4 family. Component of the RNA exosome complex. Interacts with RPP41. As to expression, expressed in roots, stems, rosette and cauline leaves, flowers and siliques.

The protein resides in the cytoplasm. It is found in the nucleus. It localises to the nucleolus. Non-catalytic component of the RNA exosome complex which has 3'-&gt;5' exoribonuclease activity and participates in a multitude of cellular RNA processing, maturation and degradation events. In vitro, is an active and distributive 3'-&gt;5' exonuclease requiring a free 3'-OH on the substrate and releasing nucleoside 5'-monophosphates. Required for normal embryo development. This chain is Exosome complex component RRP4 homolog, found in Arabidopsis thaliana (Mouse-ear cress).